The sequence spans 190 residues: Potassium-transporting ATPase KdpC subunit (190 aa).

A helical transmembrane segment spans residues 10 to 30 (TFIFLLLITGGVYPLLTTALG).

This sequence belongs to the KdpC family. In terms of assembly, the system is composed of three essential subunits: KdpA, KdpB and KdpC.

It is found in the cell inner membrane. In terms of biological role, part of the high-affinity ATP-driven potassium transport (or Kdp) system, which catalyzes the hydrolysis of ATP coupled with the electrogenic transport of potassium into the cytoplasm. This subunit acts as a catalytic chaperone that increases the ATP-binding affinity of the ATP-hydrolyzing subunit KdpB by the formation of a transient KdpB/KdpC/ATP ternary complex. The polypeptide is Potassium-transporting ATPase KdpC subunit (Escherichia coli O9:H4 (strain HS)).